We begin with the raw amino-acid sequence, 342 residues long: MKIKVGILGASGYAGNELVRILLNHPKVEISYLGSSSSVGQNYQDLYPNTPLNLCFENKNLDELELDLLFLATPHEFSAKLLNENLLKKMKIIDLSADFRLKNPKDYELWYKFTHPNQELLQNAVYGLCELYKEEIKKASLVANPGCYTTCSILSLYPLFKEKIIDFNSVIIDAKSGVSGAGRSAKVENLFCEVNENIKAYGLASHRHTPEIEEHLSYAAKEKITLQFTPHLVPMQRGILISAYANLKEDLQEQDIRDIYTKYYQNNKFIRLLPPQSLPQTRWVKSSNFADINFSVDQRTKRVIVLGAIDNLIKGAAGQAVQNMNLMFDFDEDEGLKFFANL.

Residue Cys147 is part of the active site.

This sequence belongs to the NAGSA dehydrogenase family. Type 1 subfamily.

Its subcellular location is the cytoplasm. It carries out the reaction N-acetyl-L-glutamate 5-semialdehyde + phosphate + NADP(+) = N-acetyl-L-glutamyl 5-phosphate + NADPH + H(+). It participates in amino-acid biosynthesis; L-arginine biosynthesis; N(2)-acetyl-L-ornithine from L-glutamate: step 3/4. In terms of biological role, catalyzes the NADPH-dependent reduction of N-acetyl-5-glutamyl phosphate to yield N-acetyl-L-glutamate 5-semialdehyde. The polypeptide is N-acetyl-gamma-glutamyl-phosphate reductase (Campylobacter jejuni subsp. jejuni serotype O:6 (strain 81116 / NCTC 11828)).